Reading from the N-terminus, the 172-residue chain is RNA silencing suppressor p19 (172 aa).

The segment covering 1-20 has biased composition (basic and acidic residues); sequence MERAIQGNDAREQANSERWD. A disordered region spans residues 1 to 38; that stretch reads MERAIQGNDAREQANSERWDGGSGSSTSPFQLPDESPS.

Belongs to the tombusvirus protein p19 family. Homodimer.

Its function is as follows. Viral suppressor of RNA silencing which binds specifically to silencing RNAs (siRNAs). Acts as a molecular caliper to specifically select siRNAs based on the length of the duplex region of the RNA. The protein is RNA silencing suppressor p19 of Tomato bushy stunt virus (strain type) (TBSV).